The following is a 151-amino-acid chain: S-protein homolog 1 (151 aa).

Residues Met-1 to Thr-18 form the signal peptide.

Belongs to the plant self-incompatibility (S1) protein family. In terms of tissue distribution, restricted to floral tissues.

The protein localises to the secreted. This chain is S-protein homolog 1, found in Arabidopsis thaliana (Mouse-ear cress).